We begin with the raw amino-acid sequence, 397 residues long: Teichoic acid D-alanine hydrolase (397 aa).

The N-terminal stretch at 1-23 (MKFNKVKLVIHACVLLFIIISIA) is a signal peptide.

It localises to the cell membrane. It catalyses the reaction [(4-D-Ala)-(2-GlcNAc)-Rib-ol-P]n-[Gro-P]m-beta-D-ManNAc-(1-&gt;4)-alpha-D-GlcNAc-P-peptidoglycan + n H2O = [(2-GlcNAc)-Rib-ol-P]n-[Gro-P]m-beta-D-ManNAc-(1-&gt;4)-alpha-D-GlcNAc-P-peptidoglycan + n D-alanine.. Its function is as follows. Catalyzes the liberation of D-alanyl moieties present on wall teichoic acid (WTA) and lipoteichoic acid (LTA). Affects the methicillin resistance level and autolysis in the presence of Triton X-100 as well as the cell wall structure. This chain is Teichoic acid D-alanine hydrolase (fmtA), found in Staphylococcus aureus (strain NCTC 8325 / PS 47).